A 124-amino-acid chain; its full sequence is Large ribosomal subunit protein bL12 (124 aa).

The protein belongs to the bacterial ribosomal protein bL12 family. In terms of assembly, homodimer. Part of the ribosomal stalk of the 50S ribosomal subunit. Forms a multimeric L10(L12)X complex, where L10 forms an elongated spine to which 2 to 4 L12 dimers bind in a sequential fashion. Binds GTP-bound translation factors.

Forms part of the ribosomal stalk which helps the ribosome interact with GTP-bound translation factors. Is thus essential for accurate translation. In Ralstonia nicotianae (strain ATCC BAA-1114 / GMI1000) (Ralstonia solanacearum), this protein is Large ribosomal subunit protein bL12.